The following is a 453-amino-acid chain: BPI fold-containing family B member 6 (453 aa).

Positions 1-18 (MLRILCLALCSLLTGTRA) are cleaved as a signal peptide. Asn-114 carries an N-linked (GlcNAc...) asparagine glycan. Cys-137 and Cys-174 are oxidised to a cystine. Residue Asn-190 is glycosylated (N-linked (GlcNAc...) asparagine).

Belongs to the BPI/LBP/Plunc superfamily. BPI/LBP family. Detected at very low levels in normal tonsils, and at higher levels in hypertrophic tonsils.

The protein localises to the secreted. The sequence is that of BPI fold-containing family B member 6 (BPIFB6) from Homo sapiens (Human).